The sequence spans 129 residues: Small ribosomal subunit protein uS11 (129 aa).

This sequence belongs to the universal ribosomal protein uS11 family. Part of the 30S ribosomal subunit. Interacts with proteins S7 and S18. Binds to IF-3.

Its function is as follows. Located on the platform of the 30S subunit, it bridges several disparate RNA helices of the 16S rRNA. Forms part of the Shine-Dalgarno cleft in the 70S ribosome. The chain is Small ribosomal subunit protein uS11 from Colwellia psychrerythraea (strain 34H / ATCC BAA-681) (Vibrio psychroerythus).